Reading from the N-terminus, the 310-residue chain is Cytochrome f (310 aa).

An N-terminal signal peptide occupies residues 1–23 (MRRLLSSTFAALIVGLAVFSAPA). The heme site is built by tyrosine 28, cysteine 48, cysteine 51, and histidine 52. Residues 277 to 297 (IYGMLAFFAAVALAQIMLVLK) traverse the membrane as a helical segment.

This sequence belongs to the cytochrome f family. In terms of assembly, the 4 large subunits of the cytochrome b6-f complex are cytochrome b6, subunit IV (17 kDa polypeptide, PetD), cytochrome f and the Rieske protein, while the 4 small subunits are PetG, PetL, PetM and PetN. The complex functions as a dimer. Heme serves as cofactor.

Its subcellular location is the cellular thylakoid membrane. Functionally, component of the cytochrome b6-f complex, which mediates electron transfer between photosystem II (PSII) and photosystem I (PSI), cyclic electron flow around PSI, and state transitions. The chain is Cytochrome f from Synechococcus sp. (strain CC9311).